The chain runs to 491 residues: AP-2 complex subunit mu (491 aa).

Ser-179, Ser-180, and Ser-181 each carry phosphoserine. Positions Lys-209–Arg-490 constitute an MHD domain.

The protein belongs to the adaptor complexes medium subunit family. Adaptor protein complex 2 (AP-2) is a heterotetramer composed of two large adaptins (alpha-type subunit APL3 and beta-type subunit APL1), a medium chain (mu-type subunit APM4) and a small adaptin (sigma-type subunit APS2).

Its subcellular location is the membrane. It is found in the clathrin-coated pit. It localises to the cytoplasmic vesicle. The protein localises to the clathrin-coated vesicle membrane. In terms of biological role, component of the adaptor complexes which link clathrin to receptors in coated vesicles. Clathrin-associated protein complexes are believed to interact with the cytoplasmic tails of membrane proteins, leading to their selection and concentration. In Saccharomyces cerevisiae (strain ATCC 204508 / S288c) (Baker's yeast), this protein is AP-2 complex subunit mu (APM4).